Consider the following 399-residue polypeptide: uncharacterized protein (399 aa).

Transmembrane regions (helical) follow at residues 26–46 (LLTI…ISLG), 266–286 (VITI…AVGI), 301–321 (IGIL…FVVE), 324–344 (FLGL…AEVI), and 358–378 (AWIS…VGVI).

Belongs to the ABC-4 integral membrane protein family.

It is found in the cell membrane. This is an uncharacterized protein from Methanocaldococcus jannaschii (strain ATCC 43067 / DSM 2661 / JAL-1 / JCM 10045 / NBRC 100440) (Methanococcus jannaschii).